Here is a 288-residue protein sequence, read N- to C-terminus: Polyamine aminopropyltransferase (288 aa).

A PABS domain is found at 9 to 238 (ETLHDQFGQY…GIMTFAWATD (230 aa)). S-methyl-5'-thioadenosine is bound at residue Gln-33. Residues His-64 and Asp-88 each contribute to the spermidine site. Residues Glu-108 and 140 to 141 (DG) contribute to the S-methyl-5'-thioadenosine site. The Proton acceptor role is filled by Asp-158. 158–161 (DCTD) contacts spermidine. Residue Pro-165 coordinates S-methyl-5'-thioadenosine.

It belongs to the spermidine/spermine synthase family. In terms of assembly, homodimer or homotetramer.

Its subcellular location is the cytoplasm. It catalyses the reaction S-adenosyl 3-(methylsulfanyl)propylamine + putrescine = S-methyl-5'-thioadenosine + spermidine + H(+). Its pathway is amine and polyamine biosynthesis; spermidine biosynthesis; spermidine from putrescine: step 1/1. In terms of biological role, catalyzes the irreversible transfer of a propylamine group from the amino donor S-adenosylmethioninamine (decarboxy-AdoMet) to putrescine (1,4-diaminobutane) to yield spermidine. The sequence is that of Polyamine aminopropyltransferase from Shigella sonnei (strain Ss046).